Here is a 159-residue protein sequence, read N- to C-terminus: Phosphopantetheine adenylyltransferase (159 aa).

Thr10 lines the substrate pocket. ATP contacts are provided by residues 10-11 and His18; that span reads TF. Substrate is bound by residues Lys42, Met74, and Arg88. ATP-binding positions include 89–91, Glu99, and 124–130; these read GLR and WSFISSS.

The protein belongs to the bacterial CoaD family. In terms of assembly, homohexamer. It depends on Mg(2+) as a cofactor.

Its subcellular location is the cytoplasm. The enzyme catalyses (R)-4'-phosphopantetheine + ATP + H(+) = 3'-dephospho-CoA + diphosphate. It functions in the pathway cofactor biosynthesis; coenzyme A biosynthesis; CoA from (R)-pantothenate: step 4/5. Functionally, reversibly transfers an adenylyl group from ATP to 4'-phosphopantetheine, yielding dephospho-CoA (dPCoA) and pyrophosphate. This chain is Phosphopantetheine adenylyltransferase, found in Escherichia coli O7:K1 (strain IAI39 / ExPEC).